The sequence spans 464 residues: Argininosuccinate lyase (464 aa).

The protein belongs to the lyase 1 family. Argininosuccinate lyase subfamily.

It is found in the cytoplasm. The enzyme catalyses 2-(N(omega)-L-arginino)succinate = fumarate + L-arginine. Its pathway is amino-acid biosynthesis; L-arginine biosynthesis; L-arginine from L-ornithine and carbamoyl phosphate: step 3/3. In Janthinobacterium sp. (strain Marseille) (Minibacterium massiliensis), this protein is Argininosuccinate lyase.